The sequence spans 202 residues: Orotate phosphoribosyltransferase (202 aa).

5-phospho-alpha-D-ribose 1-diphosphate-binding positions include Arg-94, Lys-98, His-100, and 120-128 (EDLISTGGS). An orotate-binding site is contributed by Ser-124.

Belongs to the purine/pyrimidine phosphoribosyltransferase family. PyrE subfamily. As to quaternary structure, homodimer. Mg(2+) is required as a cofactor.

It catalyses the reaction orotidine 5'-phosphate + diphosphate = orotate + 5-phospho-alpha-D-ribose 1-diphosphate. Its pathway is pyrimidine metabolism; UMP biosynthesis via de novo pathway; UMP from orotate: step 1/2. In terms of biological role, catalyzes the transfer of a ribosyl phosphate group from 5-phosphoribose 1-diphosphate to orotate, leading to the formation of orotidine monophosphate (OMP). This is Orotate phosphoribosyltransferase from Staphylococcus haemolyticus (strain JCSC1435).